Reading from the N-terminus, the 64-residue chain is Large ribosomal subunit protein bL35 (64 aa).

A compositionally biased stretch (polar residues) spans 1-10; the sequence is MPKMKTNSAA. Positions 1–64 are disordered; sequence MPKMKTNSAA…AKKLHQLLQK (64 aa). A compositionally biased stretch (basic residues) spans 54-64; it reads QAKKLHQLLQK.

This sequence belongs to the bacterial ribosomal protein bL35 family.

This chain is Large ribosomal subunit protein bL35, found in Bifidobacterium longum (strain NCC 2705).